Consider the following 230-residue polypeptide: Large ribosomal subunit protein uL1 (230 aa).

It belongs to the universal ribosomal protein uL1 family. In terms of assembly, part of the 50S ribosomal subunit.

Binds directly to 23S rRNA. The L1 stalk is quite mobile in the ribosome, and is involved in E site tRNA release. Functionally, protein L1 is also a translational repressor protein, it controls the translation of the L11 operon by binding to its mRNA. The protein is Large ribosomal subunit protein uL1 of Gluconobacter oxydans (strain 621H) (Gluconobacter suboxydans).